Consider the following 448-residue polypeptide: Glutamyl-tRNA reductase 2 (448 aa).

Substrate is bound by residues Thr-50 to Arg-53, Ser-109, Glu-114 to Asp-116, and Gln-120. The active-site Nucleophile is the Cys-51. Residue Gly-190–Ala-195 coordinates NADP(+). The segment at Asp-423–Arg-448 is disordered. Residues Pro-433–Ala-442 are compositionally biased toward polar residues.

The protein belongs to the glutamyl-tRNA reductase family. As to quaternary structure, homodimer.

The enzyme catalyses (S)-4-amino-5-oxopentanoate + tRNA(Glu) + NADP(+) = L-glutamyl-tRNA(Glu) + NADPH + H(+). Its pathway is porphyrin-containing compound metabolism; protoporphyrin-IX biosynthesis; 5-aminolevulinate from L-glutamyl-tRNA(Glu): step 1/2. Functionally, catalyzes the NADPH-dependent reduction of glutamyl-tRNA(Glu) to glutamate 1-semialdehyde (GSA). This chain is Glutamyl-tRNA reductase 2, found in Nocardioides sp. (strain ATCC BAA-499 / JS614).